A 155-amino-acid polypeptide reads, in one-letter code: Protein FAM162B (155 aa).

The helical transmembrane segment at 95-114 threads the bilayer; sequence VKACYIMMGLTIFACLVMIV.

It belongs to the UPF0389 family.

The protein resides in the membrane. In Danio rerio (Zebrafish), this protein is Protein FAM162B (fam162b).